A 187-amino-acid chain; its full sequence is Orotate phosphoribosyltransferase (187 aa).

Residues R98, K99, K102, H104, and 128 to 136 (EDVTTTGGS) each bind 5-phospho-alpha-D-ribose 1-diphosphate. 2 residues coordinate orotate: T132 and R160.

It belongs to the purine/pyrimidine phosphoribosyltransferase family. PyrE subfamily. In terms of assembly, homodimer. The cofactor is Mg(2+).

It carries out the reaction orotidine 5'-phosphate + diphosphate = orotate + 5-phospho-alpha-D-ribose 1-diphosphate. The protein operates within pyrimidine metabolism; UMP biosynthesis via de novo pathway; UMP from orotate: step 1/2. Its function is as follows. Catalyzes the transfer of a ribosyl phosphate group from 5-phosphoribose 1-diphosphate to orotate, leading to the formation of orotidine monophosphate (OMP). The chain is Orotate phosphoribosyltransferase from Rhodopseudomonas palustris (strain TIE-1).